The following is a 255-amino-acid chain: Triosephosphate isomerase (255 aa).

9-11 (NWK) contributes to the substrate binding site. The active-site Electrophile is His95. Glu167 acts as the Proton acceptor in catalysis. Substrate-binding positions include Gly173, Ser212, and 233–234 (GG).

The protein belongs to the triosephosphate isomerase family. In terms of assembly, homodimer.

The protein localises to the cytoplasm. It catalyses the reaction D-glyceraldehyde 3-phosphate = dihydroxyacetone phosphate. It functions in the pathway carbohydrate biosynthesis; gluconeogenesis. The protein operates within carbohydrate degradation; glycolysis; D-glyceraldehyde 3-phosphate from glycerone phosphate: step 1/1. Involved in the gluconeogenesis. Catalyzes stereospecifically the conversion of dihydroxyacetone phosphate (DHAP) to D-glyceraldehyde-3-phosphate (G3P). This is Triosephosphate isomerase from Salmonella dublin (strain CT_02021853).